The primary structure comprises 379 residues: MLHSSLHPSIPQPRGRRAKKAAFVLLSVCLVVLWDLGERPEHILQWLMLHLASLQLGLLFKGVCSLVEELRHVHSRYQGSYWKAVRACLGCPIRCGTLLLLSCYFYTPFPNTTHLPFTWTLALLGLSQALSILLDLQDLAPAEVSAVCERRNLNVAQGMAWSFYIGYLRLILPGLPARIHSYNQHHNNLLRGAGSHRLYILFPLDCGVPDDLSMVDPNIRFLHELPLQKADRAGIKSRVYTNSVYELLENGRPVGACVLEYATPLQTLFAMSQDSRAGFSREDRLEQAKLFCKTLEDILADAPECQNNCRLVVYQEPAEGGNFSLSQEILRHLKQEEKEEVTVDSARTSVMPDPSMLPQGPELLISSMDQPLPLRTDVF.

Helical transmembrane passes span 18 to 38 and 43 to 63; these read AKKAAFVLLSVCLVVLWDLGE and ILQWLMLHLASLQLGLLFKGV. 2 S-palmitoyl cysteine lipidation sites follow: Cys-88 and Cys-91. Helical transmembrane passes span 89–109 and 114–134; these read LGCPIRCGTLLLLSCYFYTPF and HLPFTWTLALLGLSQALSILL. Residues 153–340 are cyclic dinucleotide-binding domain (CBD); the sequence is LNVAQGMAWS…RHLKQEEKEE (188 aa). 4 residues coordinate 2',3'-cGAMP: Ser-162, Tyr-167, Arg-238, and Thr-263. 3',3'-c-di-GMP contacts are provided by residues Ser-162, Tyr-167, 238 to 241, and Thr-263; that span reads RVYT. The 2',3'-cUAMP site is built by Tyr-167, Arg-238, and Thr-263. Positions 338–363 are disordered; that stretch reads KEEVTVDSARTSVMPDPSMLPQGPEL. The tract at residues 340-379 is C-terminal tail (CTT); sequence EVTVDSARTSVMPDPSMLPQGPELLISSMDQPLPLRTDVF. Ser-355 carries the post-translational modification Phosphoserine. Residues 363–366 carry the pLxIS motif motif; it reads LLIS. Ser-366 is subject to Phosphoserine; by TBK1.

It belongs to the STING family. As to quaternary structure, homodimer; forms a homodimer in absence of cyclic nucleotide (c-di-GMP or cGAMP). Homotetramer; in presence of cyclic nucleotide (c-di-GMP or cGAMP), forms tetramers and higher-order oligomers through side-by-side packing. Interacts (when phosphorylated) with IRF3; following activation and phosphorylation on the pLxIS motif by TBK1, recruits IRF3. Interacts with TBK1; when homodimer, leading to subsequent production of IFN-beta. Interacts (via transmembrane domain) with TMEM203. Post-translationally, phosphorylation by TBK1 leads to activation and production of IFN-beta. Following cyclic nucleotide (c-di-GMP or cGAMP)-binding, activation and translocation from the endoplasmic reticulum, STING1 is phosphorylated by TBK1 at Ser-366 in the pLxIS motif. The phosphorylated pLxIS motif constitutes an IRF3-binding motif, leading to recruitment of the transcription factor IRF3 to induce type-I interferons and other cytokines. In contrast, lacks phosphorylation site at position 358, leading to reduced production of type-I interferons and other cytokines.

The protein resides in the endoplasmic reticulum membrane. The protein localises to the cytoplasm. It localises to the perinuclear region. It is found in the endoplasmic reticulum-Golgi intermediate compartment membrane. Its subcellular location is the golgi apparatus membrane. The protein resides in the cytoplasmic vesicle. The protein localises to the autophagosome membrane. It localises to the mitochondrion outer membrane. It is found in the cell membrane. It carries out the reaction H(+)(in) = H(+)(out). Functionally, facilitator of innate immune signaling that acts as a sensor of cytosolic DNA from bacteria and viruses and promotes low production of type I interferon (IFN-alpha and IFN-beta). Compared to other mammals, STING1-dependent type I interferon induction is strongly reduced in bats, suggesting that the cGAS-STING pathway promotes a limited inflammatory response. Innate immune response is triggered in response to non-CpG double-stranded DNA from viruses and bacteria delivered to the cytoplasm. Acts by binding cyclic dinucleotides: recognizes and binds cyclic di-GMP (c-di-GMP), a second messenger produced by bacteria, cyclic UMP-AMP (2',3'-cUAMP), and cyclic GMP-AMP (cGAMP), a messenger produced by CGAS in response to DNA virus in the cytosol. Upon binding to c-di-GMP, cUAMP or cGAMP, STING1 oligomerizes, translocates from the endoplasmic reticulum and is phosphorylated by TBK1 on the pLxIS motif, leading to recruitment and subsequent activation of the transcription factor IRF3 to induce expression of type I interferon and exert a potent anti-viral state. In addition to promote the production of type I interferons, plays a direct role in autophagy. Following cGAMP-binding, STING1 buds from the endoplasmic reticulum into COPII vesicles, which then form the endoplasmic reticulum-Golgi intermediate compartment (ERGIC). The ERGIC serves as the membrane source for WIPI2 recruitment and LC3 lipidation, leading to formation of autophagosomes that target cytosolic DNA or DNA viruses for degradation by the lysosome. Promotes autophagy by acting as a proton channel that directs proton efflux from the Golgi to facilitate MAP1LC3B/LC3B lipidation. The autophagy- and interferon-inducing activities can be uncoupled and autophagy induction is independent of TBK1 phosphorylation. This is Stimulator of interferon genes protein from Pteronotus parnellii (Parnell's mustached bat).